Consider the following 234-residue polypeptide: 7-carboxy-7-deazaguanine synthase (234 aa).

The interval 1–28 (MPLNCDTKTAGEISSSIPSGSGSHQPAA) is disordered. Residues 13–23 (ISSSIPSGSGS) are compositionally biased toward low complexity. Substrate is bound by residues 42 to 44 (LQG) and arginine 57. In terms of domain architecture, Radical SAM core spans 48–234 (TSGYPTIFIR…LQLHKFIGLP (187 aa)). [4Fe-4S] cluster contacts are provided by cysteine 61, cysteine 65, and cysteine 68. Residue threonine 70 participates in Mg(2+) binding. Residue threonine 100 coordinates substrate. Glycine 102 serves as a coordination point for S-adenosyl-L-methionine. Proline 234 lines the substrate pocket.

Belongs to the radical SAM superfamily. 7-carboxy-7-deazaguanine synthase family. As to quaternary structure, homodimer. [4Fe-4S] cluster is required as a cofactor. Requires S-adenosyl-L-methionine as cofactor. Mg(2+) serves as cofactor.

The catalysed reaction is 6-carboxy-5,6,7,8-tetrahydropterin + H(+) = 7-carboxy-7-deazaguanine + NH4(+). The protein operates within purine metabolism; 7-cyano-7-deazaguanine biosynthesis. Functionally, catalyzes the complex heterocyclic radical-mediated conversion of 6-carboxy-5,6,7,8-tetrahydropterin (CPH4) to 7-carboxy-7-deazaguanine (CDG), a step common to the biosynthetic pathways of all 7-deazapurine-containing compounds. The protein is 7-carboxy-7-deazaguanine synthase of Methanospirillum hungatei JF-1 (strain ATCC 27890 / DSM 864 / NBRC 100397 / JF-1).